Consider the following 782-residue polypeptide: DNA repair and recombination protein RAD54-like (782 aa).

Residues 1-20 are compositionally biased toward polar residues; the sequence is MRRSLAPSQRGGQRLSSRND. The disordered stretch occupies residues 1-28; that stretch reads MRRSLAPSQRGGQRLSSRNDFTPPLLKK. The segment at 2-9 is required for chromatin remodeling, strand pairing activities and coupling of ATPase activity; that stretch reads RRSLAPSQ. Phosphothreonine is present on threonine 22. Residues 168–343 form the Helicase ATP-binding domain; it reads EGKRGNFNGC…FSLVNFVNPE (176 aa). ATP is bound at residue 181-188; that stretch reads DEMGLGKT. The short motif at 294-297 is the DEGH box element; that stretch reads DEGH. The 158-residue stretch at 501–658 folds into the Helicase C-terminal domain; sequence LLDFMLAAIR…NNESAEKHFT (158 aa). Residues 741–753 are compositionally biased toward polar residues; the sequence is SQKIEATPATETS. The tract at residues 741–782 is disordered; the sequence is SQKIEATPATETSVEAKLEPERRKRPAMPLSDDSADEDFQGF. The segment covering 773 to 782 has biased composition (acidic residues); sequence DSADEDFQGF.

It belongs to the SNF2/RAD54 helicase family. Interacts (via N-terminus) with spn-A/Rad51.

Its subcellular location is the nucleus. In terms of biological role, involved in mitotic DNA repair and meiotic recombination. Functions in the recombinational DNA repair pathway. Essential for interhomolog gene conversion (GC), but may have a less important role in intersister GC than spn-A/Rad51. In the presence of DNA, spn-A/Rad51 enhances the ATPase activity of okr/Rad54. The sequence is that of DNA repair and recombination protein RAD54-like from Drosophila persimilis (Fruit fly).